A 98-amino-acid polypeptide reads, in one-letter code: Large ribosomal subunit protein eL30 (98 aa).

The protein belongs to the eukaryotic ribosomal protein eL30 family.

The protein is Large ribosomal subunit protein eL30 of Methanosphaera stadtmanae (strain ATCC 43021 / DSM 3091 / JCM 11832 / MCB-3).